Reading from the N-terminus, the 288-residue chain is Carbon monoxide dehydrogenase medium chain (288 aa).

The region spanning 1–177 is the FAD-binding PCMH-type domain; sequence MIPGSFDYHR…TAIRIPVPPT (177 aa). Residues 32–36 and 111–115 each bind FAD; these read AGGHS and TIGGN.

Dimer of heterotrimers. Each heterotrimer consists of a large, a medium and a small subunit. It depends on FAD as a cofactor.

It catalyses the reaction CO + a quinone + H2O = a quinol + CO2. In terms of biological role, catalyzes the oxidation of carbon monoxide to carbon dioxide. This is Carbon monoxide dehydrogenase medium chain (coxM) from Afipia carboxidovorans (strain ATCC 49405 / DSM 1227 / KCTC 32145 / OM5) (Oligotropha carboxidovorans).